The chain runs to 158 residues: ATP synthase subunit delta, mitochondrial (158 aa).

Residues 1-22 constitute a mitochondrion transit peptide; that stretch reads MFRLTSARALFRVANVAARRTY.

Belongs to the ATPase epsilon chain family. F-type ATPases have 2 components, CF(1) - the catalytic core - and CF(0) - the membrane proton channel. CF(1) has five subunits: alpha(3), beta(3), gamma(1), delta(1), epsilon(1). CF(0) has three main subunits: a, b and c.

The protein localises to the mitochondrion. Its subcellular location is the mitochondrion inner membrane. Functionally, mitochondrial membrane ATP synthase (F(1)F(0) ATP synthase or Complex V) produces ATP from ADP in the presence of a proton gradient across the membrane which is generated by electron transport complexes of the respiratory chain. F-type ATPases consist of two structural domains, F(1) - containing the extramembraneous catalytic core, and F(0) - containing the membrane proton channel, linked together by a central stalk and a peripheral stalk. During catalysis, ATP turnover in the catalytic domain of F(1) is coupled via a rotary mechanism of the central stalk subunits to proton translocation. Part of the complex F(1) domain and of the central stalk which is part of the complex rotary element. Rotation of the central stalk against the surrounding alpha(3)beta(3) subunits leads to hydrolysis of ATP in three separate catalytic sites on the beta subunits. This is ATP synthase subunit delta, mitochondrial (ATP16) from Eremothecium gossypii (strain ATCC 10895 / CBS 109.51 / FGSC 9923 / NRRL Y-1056) (Yeast).